We begin with the raw amino-acid sequence, 479 residues long: Glycogen synthase (479 aa).

K15 lines the ADP-alpha-D-glucose pocket.

Belongs to the glycosyltransferase 1 family. Bacterial/plant glycogen synthase subfamily.

The enzyme catalyses [(1-&gt;4)-alpha-D-glucosyl](n) + ADP-alpha-D-glucose = [(1-&gt;4)-alpha-D-glucosyl](n+1) + ADP + H(+). Its pathway is glycan biosynthesis; glycogen biosynthesis. In terms of biological role, synthesizes alpha-1,4-glucan chains using ADP-glucose. The chain is Glycogen synthase from Roseobacter denitrificans (strain ATCC 33942 / OCh 114) (Erythrobacter sp. (strain OCh 114)).